A 660-amino-acid chain; its full sequence is Replication restart protein PriA (660 aa).

The Helicase ATP-binding domain occupies 145 to 313 (IIGSEKTNVF…KNNQIKKIIM (169 aa)). Residue 158–165 (GIPGSGKT) coordinates ATP. The DEAH box signature appears at 256 to 259 (DEEH). Positions 370, 373, 379, 382, 397, 400, 410, and 413 each coordinate Zn(2+). The 153-residue stretch at 405-557 (KTASHCPQCE…QFYEEELDIR (153 aa)) folds into the Helicase C-terminal domain.

This sequence belongs to the helicase family. PriA subfamily. Component of the replication restart primosome. Zn(2+) serves as cofactor.

The enzyme catalyses Couples ATP hydrolysis with the unwinding of duplex DNA by translocating in the 3'-5' direction.. It catalyses the reaction ATP + H2O = ADP + phosphate + H(+). Its function is as follows. Initiates the restart of stalled replication forks, which reloads the replicative helicase on sites other than the origin of replication. Recognizes and binds to abandoned replication forks and remodels them to uncover a helicase loading site. Promotes assembly of the primosome at these replication forks. This is Replication restart protein PriA from Borreliella burgdorferi (strain ATCC 35210 / DSM 4680 / CIP 102532 / B31) (Borrelia burgdorferi).